The sequence spans 88 residues: Small ribosomal subunit protein bS16 (88 aa).

This sequence belongs to the bacterial ribosomal protein bS16 family.

The sequence is that of Small ribosomal subunit protein bS16 from Sorangium cellulosum (strain So ce56) (Polyangium cellulosum (strain So ce56)).